The primary structure comprises 594 residues: Aspartate--tRNA(Asp/Asn) ligase (594 aa).

Residue glutamate 175 coordinates L-aspartate. Residues 199–202 (QIYK) form an aspartate region. L-aspartate contacts are provided by arginine 221 and histidine 454. 221–223 (RDE) contributes to the ATP binding site. Residue glutamate 488 participates in ATP binding. Arginine 495 is an L-aspartate binding site. Residue 540–543 (GIDR) coordinates ATP.

The protein belongs to the class-II aminoacyl-tRNA synthetase family. Type 1 subfamily. Homodimer.

It is found in the cytoplasm. It catalyses the reaction tRNA(Asx) + L-aspartate + ATP = L-aspartyl-tRNA(Asx) + AMP + diphosphate. Functionally, aspartyl-tRNA synthetase with relaxed tRNA specificity since it is able to aspartylate not only its cognate tRNA(Asp) but also tRNA(Asn). Reaction proceeds in two steps: L-aspartate is first activated by ATP to form Asp-AMP and then transferred to the acceptor end of tRNA(Asp/Asn). This is Aspartate--tRNA(Asp/Asn) ligase from Chelativorans sp. (strain BNC1).